We begin with the raw amino-acid sequence, 71 residues long: Biotinylated protein TB7.3 homolog (71 aa).

The region spanning Ala2 to Asp71 is the Biotinyl-binding domain. Lys37 carries the post-translational modification N6-biotinyllysine.

This chain is Biotinylated protein TB7.3 homolog, found in Mycolicibacterium smegmatis (strain ATCC 700084 / mc(2)155) (Mycobacterium smegmatis).